Consider the following 400-residue polypeptide: Tryptophan 2,3-dioxygenase (400 aa).

Residues 75–79 (FIIIH) and Arg-146 contribute to the substrate site. Residue His-332 participates in heme binding. Residue Thr-346 participates in substrate binding.

This sequence belongs to the tryptophan 2,3-dioxygenase family. Homotetramer. Dimer of dimers. It depends on heme as a cofactor.

The catalysed reaction is L-tryptophan + O2 = N-formyl-L-kynurenine. Its pathway is amino-acid degradation; L-tryptophan degradation via kynurenine pathway; L-kynurenine from L-tryptophan: step 1/2. Heme-dependent dioxygenase that catalyzes the oxidative cleavage of the L-tryptophan (L-Trp) pyrrole ring and converts L-tryptophan to N-formyl-L-kynurenine. Catalyzes the oxidative cleavage of the indole moiety. This is Tryptophan 2,3-dioxygenase from Dictyostelium discoideum (Social amoeba).